The following is a 143-amino-acid chain: Hemoglobin subunit alpha (143 aa).

Residues 2 to 143 form the Globin domain; it reads VLSPADKTNV…VSTVLVSKYR (142 aa). Serine 4 is subject to Phosphoserine. The residue at position 8 (lysine 8) is an N6-succinyllysine. Threonine 9 carries the post-translational modification Phosphothreonine. Residue lysine 12 is modified to N6-succinyllysine. The residue at position 17 (lysine 17) is an N6-acetyllysine; alternate. At lysine 17 the chain carries N6-succinyllysine; alternate. Tyrosine 25 is modified (phosphotyrosine). Serine 36 is modified (phosphoserine). The residue at position 41 (lysine 41) is an N6-succinyllysine. Serine 51 carries the phosphoserine modification. Position 60 (histidine 60) interacts with O2. Histidine 89 is a heme b binding site. At serine 104 the chain carries Phosphoserine. Phosphothreonine is present on threonine 110. Position 126 is a phosphoserine (serine 126). Phosphothreonine is present on threonine 136. The residue at position 140 (serine 140) is a Phosphoserine.

The protein belongs to the globin family. Heterotetramer of two alpha chains and two beta chains. In terms of tissue distribution, red blood cells.

In terms of biological role, involved in oxygen transport from the lung to the various peripheral tissues. Hemopressin acts as an antagonist peptide of the cannabinoid receptor CNR1. Hemopressin-binding efficiently blocks cannabinoid receptor CNR1 and subsequent signaling. The protein is Hemoglobin subunit alpha (HBA) of Pipistrellus abramus (Japanese pipistrelle).